The sequence spans 120 residues: uncharacterized protein (120 aa).

It to E.coli YiaW.

This is an uncharacterized protein from Escherichia coli (strain K12).